Consider the following 598-residue polypeptide: NADH-ubiquinone oxidoreductase chain 5 (598 aa).

The next 14 membrane-spanning stretches (helical) occupy residues 6–26 (LTLI…PPII), 32–52 (MILT…PLTI), 84–100 (YTVI…WSIM), 113–133 (MDKF…FISA), 136–156 (LLQL…LISW), 241–261 (TPVS…FLLI), 272–292 (LMLE…ALCA), 301–320 (IIAF…VGLN), 325–347 (AFLH…GSII), 370–390 (TTCM…AGFF), 409–429 (LMVT…LIIM), 456–476 (LAWG…PMKP), 478–498 (IFTM…ISLI), and 576–596 (LNSA…LSLT).

The protein belongs to the complex I subunit 5 family.

The protein localises to the mitochondrion inner membrane. It catalyses the reaction a ubiquinone + NADH + 5 H(+)(in) = a ubiquinol + NAD(+) + 4 H(+)(out). Its function is as follows. Core subunit of the mitochondrial membrane respiratory chain NADH dehydrogenase (Complex I) that is believed to belong to the minimal assembly required for catalysis. Complex I functions in the transfer of electrons from NADH to the respiratory chain. The immediate electron acceptor for the enzyme is believed to be ubiquinone. This Petromyzon marinus (Sea lamprey) protein is NADH-ubiquinone oxidoreductase chain 5 (MT-ND5).